A 140-amino-acid chain; its full sequence is FlaA locus uncharacterized protein YlxG (140 aa).

The segment at 1–21 is disordered; the sequence is MTSISSEYKLPEKTNTVSTNN.

It belongs to the FlgD family.

The protein is FlaA locus uncharacterized protein YlxG (ylxG) of Bacillus subtilis (strain 168).